Here is a 117-residue protein sequence, read N- to C-terminus: Non-specific lipid-transfer protein 1 (117 aa).

A signal peptide spans 1-25 (MAGLVKLSCLVLACMIVAGPIATNA). Intrachain disulfides connect cysteine 29–cysteine 76, cysteine 39–cysteine 53, cysteine 54–cysteine 99, and cysteine 74–cysteine 113.

Belongs to the plant LTP family.

Functionally, plant non-specific lipid-transfer proteins transfer phospholipids as well as galactolipids across membranes. May play a role in wax or cutin deposition in the cell walls of expanding epidermal cells and certain secretory tissues. This Brassica napus (Rape) protein is Non-specific lipid-transfer protein 1 (LTP1).